Here is a 421-residue protein sequence, read N- to C-terminus: MHRFFKSEFFNFEFIRILSAAPYGGAEIAECLVAAGQITNDDPESWHRAWIIQADKAKALGDEALHSGDTVSARRAYLRASNYYRASGYMFHDRPGAPDARVLPLAQQVLDTYALTLPLLDTGEASQLKIPFENHQLAAYLYLPRDRTKPVPVLLSLGGADSIQEELYYVYAASGPQLGYAVLTFEGPGQGITLRRDKMHMRPDWEVVVGRVLDFLTAYMQQNPSVQLDLSRVAVVGASMGGYYALRAAADPRIGACVSIDPFYDMWDFVRNHVSPALLNAWNAGWVPSRVVNGIMSMAMAASFQAKWEVGLAMWFFGVDSPTQTLRHMMKYTLARADGTSRLDQVKCPVLVSGATQSLYLEPESDVLRVFDALAHLGDERREIWIARSPEEGGLQAKIGAIGLVVQRTFRFLDQHLNVTR.

The active-site Nucleophile is the serine 239.

It belongs to the AB hydrolase superfamily. FUS2 hydrolase family. As to quaternary structure, homodimer.

Its pathway is secondary metabolite biosynthesis. In terms of biological role, hydrolyase; part of the gene cluster that mediates the biosynthesis of oxaleimides, cytotoxic compounds containing an unusual disubstituted succinimide moiety. The first step of the pathway is provided by the HR-PKS poxF that serves in a new mode of collaborative biosynthesis with the PKS-NRPS poxE, by providing the olefin containing amino acid substrate via the synthesis of an ACP-bound dec-4-enoate. The cytochrome P450 monooxygenase poxM-catalyzed oxidation at the alpha-position creates the enzyme-bound 2-hydroxydec-4-enoyl-ACP thioester, which may be prone to spontaneous hydrolysis to yield 2-hydroxydec-4-enoic acid due to increased electrophilicity of the carbonyl. 2-hydroxydec-4-enoic acid can then be further oxidized by poxM to yield the alpha-ketoacid 2-oxodec-4-enoicacid, which is reductively aminated by the aminotransferase poxL to yield (S,E)-2-aminodec-4-enoic acid. The Hybrid PKS-NRPS synthetase poxE then performs condensation between the octaketide product of its PKS modules and the amino group of (S,E)-2-aminodec-4-enoic acid which is activated and incorporated by the adenylation domain. The resulting aminoacyl product can be cyclized by the Diels-Alderase PoxQ and reductively released by the reductive (R) domain of poxE to yield an aldehyde intermediate. The released aldehyde is then substrate for a Knoevenagel condensation by the hydrolyase poxO followed by an oxidation at the 5-position of the pyrrolidone ring. The presence of the olefin from the amino acid building block allows for migration of the substituted allyl group to occur. This allylic transposition reaction takes place in a conjugate addition, semipinacol-like fashion to yield a succinimide intermediate. Iterative two-electron oxidations of the C7 methyl of the succinimide intermediate to the carboxylic acid can be catalyzed by one of two remaining cytochrome P450 monooxygenasess poxC or poxD to yield oxaleimide A. Subsequent oxidation yields the maleimide scaffold oxaleimide I. Both oxaleimide A and oxaleimide I can undergo oxidative modifications in the decalin ring to yield the series of products oxaleimides B to H. In Penicillium oxalicum, this protein is Hydrolyase poxO.